Consider the following 484-residue polypeptide: Glutamyl-tRNA(Gln) amidotransferase subunit A (484 aa).

Residues Lys-78 and Ser-153 each act as charge relay system in the active site. The active-site Acyl-ester intermediate is Ser-177.

Belongs to the amidase family. GatA subfamily. As to quaternary structure, heterotrimer of A, B and C subunits.

The catalysed reaction is L-glutamyl-tRNA(Gln) + L-glutamine + ATP + H2O = L-glutaminyl-tRNA(Gln) + L-glutamate + ADP + phosphate + H(+). Allows the formation of correctly charged Gln-tRNA(Gln) through the transamidation of misacylated Glu-tRNA(Gln) in organisms which lack glutaminyl-tRNA synthetase. The reaction takes place in the presence of glutamine and ATP through an activated gamma-phospho-Glu-tRNA(Gln). This chain is Glutamyl-tRNA(Gln) amidotransferase subunit A, found in Thermodesulfovibrio yellowstonii (strain ATCC 51303 / DSM 11347 / YP87).